The primary structure comprises 99 residues: U1-theraphotoxin-Lsp1c (99 aa).

An N-terminal signal peptide occupies residues 1-23 (MRKITIRALLLCSLLLVFHTSAA). A propeptide spanning residues 24–50 (AELQAQEGHLMIPGDTDTALETVDDER) is cleaved from the precursor. Cystine bridges form between Cys-54–Cys-67, Cys-58–Cys-91, Cys-72–Cys-74, and Cys-85–Cys-96.

Belongs to the neurotoxin 12 (Hwtx-2) family. 04 (lasiotoxin) subfamily. Expressed by the venom gland.

Its subcellular location is the secreted. Its function is as follows. Toxin that causes irreversible contractile paralysis into adult Aedes aegypti resulting in 100% mortality after 24 hours. The chain is U1-theraphotoxin-Lsp1c from Lasiodora sp. (strain IBSP 8539) (Brazilian salmon pink birdeater).